The following is a 309-amino-acid chain: Agglutinin (309 aa).

At methionine 1 the chain carries N-acetylmethionine. Jacalin-type lectin domains are found at residues 4 to 148 and 163 to 308; these read FLTV…YVKI and PRGP…HMEY.

The protein belongs to the jacalin lectin family.

Functionally, D-mannose/D-glucose-binding lectin. Binds N-linked high-mannose-type glycans. Has a preference for smaller (Man(2)-Man(6)) high-mannose-type glycans to larger (Man(7)-Man(9)) ones. Recognizes both alpha1-6 extended and alpha1-3 extended monoantennary glycans. The addition of alpha1-2Man to the Man-alpha1-3Man-beta branch results in a significant loss of affinity, but beta1-2GlcNAc has some affinity. Has less affinity for biantennary glycans, and affinity is very weak for the biantennary complex-type N-glycans with bisecting GlcNAc. No affinity is observed for tri- and tetra-antennary glycans. Has mitogenic and hemagglutinating activities. This chain is Agglutinin, found in Castanea crenata (Japanese chestnut).